The following is a 568-amino-acid chain: Oxygen-dependent choline dehydrogenase (568 aa).

Position 8–37 (8–37 (DYVIIGGGSAGSVLGNRLTEDKDKEVLVLE)) interacts with FAD. His473 serves as the catalytic Proton acceptor.

Belongs to the GMC oxidoreductase family. FAD is required as a cofactor.

The enzyme catalyses choline + A = betaine aldehyde + AH2. It carries out the reaction betaine aldehyde + NAD(+) + H2O = glycine betaine + NADH + 2 H(+). It functions in the pathway amine and polyamine biosynthesis; betaine biosynthesis via choline pathway; betaine aldehyde from choline (cytochrome c reductase route): step 1/1. Its function is as follows. Involved in the biosynthesis of the osmoprotectant glycine betaine. Catalyzes the oxidation of choline to betaine aldehyde and betaine aldehyde to glycine betaine at the same rate. In Staphylococcus haemolyticus (strain JCSC1435), this protein is Oxygen-dependent choline dehydrogenase.